A 199-amino-acid chain; its full sequence is Dephospho-CoA kinase (199 aa).

The 197-residue stretch at 3 to 199 (ILGLTGSIGM…ATAKMPQRRA (197 aa)) folds into the DPCK domain. 11-16 (GMGKST) serves as a coordination point for ATP.

This sequence belongs to the CoaE family.

The protein localises to the cytoplasm. The enzyme catalyses 3'-dephospho-CoA + ATP = ADP + CoA + H(+). The protein operates within cofactor biosynthesis; coenzyme A biosynthesis; CoA from (R)-pantothenate: step 5/5. Functionally, catalyzes the phosphorylation of the 3'-hydroxyl group of dephosphocoenzyme A to form coenzyme A. The protein is Dephospho-CoA kinase of Rhodopseudomonas palustris (strain BisB18).